The primary structure comprises 491 residues: MTDKKPTIEPGWNFDNSYTTLPKSFFSRLNPPPVRSPKLAILNERLAKSLGLNVEALQSEEVIAMLAGNKTPEGAMPLAQAYAGHQFGHFTMLGDGRALLLGEQITPTGERFDIQLKGSGRTPYSRGGDGRAALGPMLREYIISEAMHGLGIPTTRSLAVVTTGESVYRESELPGAILTRVAASHIRVGTFQFAARFCSIEDLRALADYTLQRHFPEIETEENRYLLLLKGVIQRQAALIAKWQLVGFIHGVMNTDNMAISGETIDYGPCAFMDTYDPATVFSSIDVQGRYAYGNQPYIAVWNLSRFAESLLPLLHENEAQAVKIAEDVLAEFSKLYHSNWLTGMRAKLGLFNEEEQDEALIEGLLNMMKEHRADYTNTFRALTLNQPEETVLFGTSEFTEWHEQWKARLTRQPEDTDAVQQGMKKNNPAVIPRNHRVEEALEAAWKEGDYTVMERLLTVLSDPYAYTPEQVEYTTLPAESARPYQTFCGT.

8 residues coordinate ATP: glycine 94, glycine 96, arginine 97, lysine 117, aspartate 129, glycine 130, arginine 180, and arginine 187. The Proton acceptor role is filled by aspartate 256. Mg(2+) is bound by residues asparagine 257 and aspartate 266. Aspartate 266 lines the ATP pocket.

The protein belongs to the SELO family. The cofactor is Mg(2+). Mn(2+) serves as cofactor.

It carries out the reaction L-seryl-[protein] + ATP = 3-O-(5'-adenylyl)-L-seryl-[protein] + diphosphate. The catalysed reaction is L-threonyl-[protein] + ATP = 3-O-(5'-adenylyl)-L-threonyl-[protein] + diphosphate. The enzyme catalyses L-tyrosyl-[protein] + ATP = O-(5'-adenylyl)-L-tyrosyl-[protein] + diphosphate. It catalyses the reaction L-histidyl-[protein] + UTP = N(tele)-(5'-uridylyl)-L-histidyl-[protein] + diphosphate. It carries out the reaction L-seryl-[protein] + UTP = O-(5'-uridylyl)-L-seryl-[protein] + diphosphate. The catalysed reaction is L-tyrosyl-[protein] + UTP = O-(5'-uridylyl)-L-tyrosyl-[protein] + diphosphate. Nucleotidyltransferase involved in the post-translational modification of proteins. It can catalyze the addition of adenosine monophosphate (AMP) or uridine monophosphate (UMP) to a protein, resulting in modifications known as AMPylation and UMPylation. This is Protein nucleotidyltransferase YdiU from Brevibacillus brevis (strain 47 / JCM 6285 / NBRC 100599).